Consider the following 315-residue polypeptide: Glycerol-3-phosphate dehydrogenase [NAD(P)+] (315 aa).

The NADPH site is built by W24, R44, R45, and K92. 2 residues coordinate sn-glycerol 3-phosphate: K92 and G120. Residue S124 coordinates NADPH. Residues K175, D228, S238, R239, and N240 each contribute to the sn-glycerol 3-phosphate site. K175 acts as the Proton acceptor in catalysis. R239 serves as a coordination point for NADPH. Residue E265 coordinates NADPH.

The protein belongs to the NAD-dependent glycerol-3-phosphate dehydrogenase family.

The protein localises to the cytoplasm. It carries out the reaction sn-glycerol 3-phosphate + NAD(+) = dihydroxyacetone phosphate + NADH + H(+). The catalysed reaction is sn-glycerol 3-phosphate + NADP(+) = dihydroxyacetone phosphate + NADPH + H(+). The protein operates within membrane lipid metabolism; glycerophospholipid metabolism. Catalyzes the reduction of the glycolytic intermediate dihydroxyacetone phosphate (DHAP) to sn-glycerol 3-phosphate (G3P), the key precursor for phospholipid synthesis. The polypeptide is Glycerol-3-phosphate dehydrogenase [NAD(P)+] (Synechococcus sp. (strain JA-2-3B'a(2-13)) (Cyanobacteria bacterium Yellowstone B-Prime)).